The primary structure comprises 173 residues: Ribosomal RNA large subunit methyltransferase H (173 aa).

S-adenosyl-L-methionine contacts are provided by Leu89 and Gly121.

The protein belongs to the RNA methyltransferase RlmH family. As to quaternary structure, homodimer.

The protein resides in the cytoplasm. The enzyme catalyses pseudouridine(1915) in 23S rRNA + S-adenosyl-L-methionine = N(3)-methylpseudouridine(1915) in 23S rRNA + S-adenosyl-L-homocysteine + H(+). In terms of biological role, specifically methylates the pseudouridine at position 1915 (m3Psi1915) in 23S rRNA. In Chelativorans sp. (strain BNC1), this protein is Ribosomal RNA large subunit methyltransferase H.